Consider the following 54-residue polypeptide: U-reduvitoxin-Pr1a (54 aa).

Positions 1–19 (MKLLGLLLLVFTFMALAFA) are cleaved as a signal peptide. 3 disulfides stabilise this stretch: cysteine 24-cysteine 39, cysteine 31-cysteine 44, and cysteine 38-cysteine 51.

This sequence belongs to the venom Ptu1-like knottin family. Expressed by the venom gland (posterior main gland) (at protein level).

Its subcellular location is the secreted. Its function is as follows. Binds reversibly and blocks P/Q-type voltage-gated calcium channels (Cav). This chain is U-reduvitoxin-Pr1a, found in Platymeris rhadamanthus (Red spot assassin bug).